The chain runs to 427 residues: Serine--tRNA ligase 2 (427 aa).

The segment covering 35–53 (RRRSEAQAEVTRLRTELNR) has biased composition (basic and acidic residues). Residues 35–72 (RRRSEAQAEVTRLRTELNRTSRARGRSGPPSEEEKEAA) form a disordered region. 230–232 (TAE) is a binding site for L-serine. 261-263 (RAE) is an ATP binding site. An L-serine-binding site is contributed by Glu284. 348 to 351 (EISS) is a binding site for ATP. Ser383 provides a ligand contact to L-serine.

The protein belongs to the class-II aminoacyl-tRNA synthetase family. Type-1 seryl-tRNA synthetase subfamily. As to quaternary structure, homodimer. The tRNA molecule binds across the dimer.

The protein resides in the cytoplasm. The enzyme catalyses tRNA(Ser) + L-serine + ATP = L-seryl-tRNA(Ser) + AMP + diphosphate + H(+). It carries out the reaction tRNA(Sec) + L-serine + ATP = L-seryl-tRNA(Sec) + AMP + diphosphate + H(+). It participates in aminoacyl-tRNA biosynthesis; selenocysteinyl-tRNA(Sec) biosynthesis; L-seryl-tRNA(Sec) from L-serine and tRNA(Sec): step 1/1. In terms of biological role, catalyzes the attachment of serine to tRNA(Ser). Is also able to aminoacylate tRNA(Sec) with serine, to form the misacylated tRNA L-seryl-tRNA(Sec), which will be further converted into selenocysteinyl-tRNA(Sec). This chain is Serine--tRNA ligase 2, found in Streptomyces avermitilis (strain ATCC 31267 / DSM 46492 / JCM 5070 / NBRC 14893 / NCIMB 12804 / NRRL 8165 / MA-4680).